The sequence spans 499 residues: Maturase K (499 aa).

The protein belongs to the intron maturase 2 family. MatK subfamily.

The protein resides in the plastid. The protein localises to the chloroplast. In terms of biological role, usually encoded in the trnK tRNA gene intron. Probably assists in splicing its own and other chloroplast group II introns. The chain is Maturase K from Gymnocladus dioicus (Kentucky coffee tree).